The following is a 520-amino-acid chain: Laccase-2 (520 aa).

A signal peptide spans Met1–Ala19. Plastocyanin-like domains follow at residues Thr21–Tyr145, Val157–Ala305, and Thr375–Ala488. Positions 82 and 84 each coordinate Cu cation. Disulfide bonds link Cys103/Cys509 and Cys135/Cys229. The N-linked (GlcNAc...) asparagine glycan is linked to Asn108. Residues His127 and His129 each contribute to the Cu cation site. Residues Asn241 and Asn299 are each glycosylated (N-linked (GlcNAc...) asparagine). Cu cation-binding residues include His417, His420, His422, His470, Cys471, His472, and His476. A glycan (N-linked (GlcNAc...) asparagine) is linked at Asn492.

The protein belongs to the multicopper oxidase family. It depends on Cu cation as a cofactor.

It is found in the secreted. It catalyses the reaction 4 hydroquinone + O2 = 4 benzosemiquinone + 2 H2O. In terms of biological role, lignin degradation and detoxification of lignin-derived products. The protein is Laccase-2 (lcc2) of Agaricus bisporus (White button mushroom).